Here is a 283-residue protein sequence, read N- to C-terminus: Tetraspanin-33 (283 aa).

Residues M1–Y24 lie on the Cytoplasmic side of the membrane. A helical membrane pass occupies residues L25–V45. At Y46 to P64 the chain is on the extracellular side. Residues A65–G85 traverse the membrane as a helical segment. Over S86 to T96 the chain is Cytoplasmic. A helical membrane pass occupies residues F97–V117. The Extracellular portion of the chain corresponds to F118–N235. Intrachain disulfides connect C156-C224, C157-C189, C173-C183, and C190-C203. N-linked (GlcNAc...) asparagine glycosylation occurs at N172. The helical transmembrane segment at L236–L256 threads the bilayer. Residues S257–Y283 are Cytoplasmic-facing.

This sequence belongs to the tetraspanin (TM4SF) family. In terms of assembly, homodimer; disulfide-linked. Interacts (via extracellular domain) with ADAM10 (via extracellular domain). Interacts (via cytoplasmic domain) with PLEKHA7 (via WW domains); the interaction is dependent on PDZD11 being bound to PLEKHA7 and facilitates the docking of ADAM10 to zonula adherens. In terms of tissue distribution, predominantly expressed in erythroblasts.

The protein localises to the cell membrane. It localises to the cell junction. It is found in the adherens junction. The protein resides in the cytoplasm. Part of TspanC8 subgroup, composed of 6 members that interact with the transmembrane metalloprotease ADAM10. This interaction is required for ADAM10 exit from the endoplasmic reticulum and for enzymatic maturation and trafficking to the cell surface as well as substrate specificity. Different TspanC8/ADAM10 complexes have distinct substrates. Plays an important role in normal erythropoiesis. It has a role in the differentiation of erythroid progenitors. Negatively regulates ligand-induced Notch activity probably by regulating ADAM10 activity. Mediates docking of ADAM10 to zonula adherens by interacting with ADAM10 and, in a PDZD11-dependent manner, with the zonula adherens protein PLEKHA7. This is Tetraspanin-33 (Tspan33) from Mus musculus (Mouse).